The following is a 900-amino-acid chain: Alanine--tRNA ligase (900 aa).

Zn(2+) contacts are provided by His604, His608, Cys708, and His712.

The protein belongs to the class-II aminoacyl-tRNA synthetase family. Zn(2+) is required as a cofactor.

It is found in the cytoplasm. The catalysed reaction is tRNA(Ala) + L-alanine + ATP = L-alanyl-tRNA(Ala) + AMP + diphosphate. Its function is as follows. Catalyzes the attachment of alanine to tRNA(Ala) in a two-step reaction: alanine is first activated by ATP to form Ala-AMP and then transferred to the acceptor end of tRNA(Ala). Also edits incorrectly charged Ser-tRNA(Ala) and Gly-tRNA(Ala) via its editing domain. The protein is Alanine--tRNA ligase of Saccharolobus islandicus (strain M.16.27) (Sulfolobus islandicus).